The chain runs to 198 residues: Putative glutathione S-transferase alpha-2 (198 aa).

Ser-2 carries the post-translational modification N-acetylserine. In terms of domain architecture, GST N-terminal spans 5–81 (SVPSLTYFQG…YIAKKHNFMG (77 aa)). Glutathione contacts are provided by residues Tyr-11, Arg-45, 52–53 (QL), and 65–66 (QS). Positions 83–198 (NLEEEFLVDQ…YIKERPETKF (116 aa)) constitute a GST C-terminal domain.

It belongs to the GST superfamily. Alpha family.

It catalyses the reaction RX + glutathione = an S-substituted glutathione + a halide anion + H(+). Conjugation of reduced glutathione to a wide number of exogenous and endogenous hydrophobic electrophiles. The sequence is that of Putative glutathione S-transferase alpha-2 (gsta2-1) from Dictyostelium discoideum (Social amoeba).